Here is a 177-residue protein sequence, read N- to C-terminus: ATP-dependent protease subunit HslV (177 aa).

Thr7 is a catalytic residue. Na(+)-binding residues include Ala162, Cys165, and Thr168.

It belongs to the peptidase T1B family. HslV subfamily. In terms of assembly, a double ring-shaped homohexamer of HslV is capped on each side by a ring-shaped HslU homohexamer. The assembly of the HslU/HslV complex is dependent on binding of ATP.

The protein resides in the cytoplasm. It catalyses the reaction ATP-dependent cleavage of peptide bonds with broad specificity.. With respect to regulation, allosterically activated by HslU binding. In terms of biological role, protease subunit of a proteasome-like degradation complex believed to be a general protein degrading machinery. In Thioalkalivibrio sulfidiphilus (strain HL-EbGR7), this protein is ATP-dependent protease subunit HslV.